The following is a 117-amino-acid chain: Large ribosomal subunit protein bL19 (117 aa).

Belongs to the bacterial ribosomal protein bL19 family.

Functionally, this protein is located at the 30S-50S ribosomal subunit interface and may play a role in the structure and function of the aminoacyl-tRNA binding site. The chain is Large ribosomal subunit protein bL19 from Shewanella pealeana (strain ATCC 700345 / ANG-SQ1).